The chain runs to 302 residues: Formylmethanofuran--tetrahydromethanopterin formyltransferase (302 aa).

It belongs to the FTR family. In terms of assembly, homotetramer.

Its subcellular location is the cytoplasm. It carries out the reaction N-formylmethanofuran + 5,6,7,8-tetrahydromethanopterin + H(+) = N(5)-formyl-5,6,7,8-tetrahydromethanopterin + methanofuran. The protein operates within one-carbon metabolism; formaldehyde degradation; formate from formaldehyde (H(4)MPT route): step 4/5. In terms of biological role, catalyzes the transfer of a formyl group from 5-formyl tetrahydromethanopterin (5-formyl-H(4)MPT) to methanofuran (MFR) to produce formylmethanofuran (formyl-MFR) and tetrahydromethanopterin (H(4)MPT). The sequence is that of Formylmethanofuran--tetrahydromethanopterin formyltransferase from Methylobacillus flagellatus (strain ATCC 51484 / DSM 6875 / VKM B-1610 / KT).